Here is a 227-residue protein sequence, read N- to C-terminus: Cytochrome c oxidase subunit 2 (227 aa).

The Mitochondrial intermembrane segment spans residues 1 to 14 (MAHPAQLGFQDAAS). The chain crosses the membrane as a helical span at residues 15–45 (PIMEELMYFHDHTLMIVFLISSLVLYIISLM). The Mitochondrial matrix portion of the chain corresponds to 46 to 59 (LTTELTHTSTMDAQ). Residues 60-87 (EVETVWTILPAVILILIALPSLRILYMM) form a helical membrane-spanning segment. Over 88 to 227 (DEITTPSLTL…HFEEWLLSTL (140 aa)) the chain is Mitochondrial intermembrane. Residues histidine 161, cysteine 196, glutamate 198, cysteine 200, histidine 204, and methionine 207 each coordinate Cu cation. Glutamate 198 serves as a coordination point for Mg(2+).

Belongs to the cytochrome c oxidase subunit 2 family. Component of the cytochrome c oxidase (complex IV, CIV), a multisubunit enzyme composed of 14 subunits. The complex is composed of a catalytic core of 3 subunits MT-CO1, MT-CO2 and MT-CO3, encoded in the mitochondrial DNA, and 11 supernumerary subunits COX4I, COX5A, COX5B, COX6A, COX6B, COX6C, COX7A, COX7B, COX7C, COX8 and NDUFA4, which are encoded in the nuclear genome. The complex exists as a monomer or a dimer and forms supercomplexes (SCs) in the inner mitochondrial membrane with NADH-ubiquinone oxidoreductase (complex I, CI) and ubiquinol-cytochrome c oxidoreductase (cytochrome b-c1 complex, complex III, CIII), resulting in different assemblies (supercomplex SCI(1)III(2)IV(1) and megacomplex MCI(2)III(2)IV(2)). Found in a complex with TMEM177, COA6, COX18, COX20, SCO1 and SCO2. Interacts with TMEM177 in a COX20-dependent manner. Interacts with COX20. Interacts with COX16. Cu cation is required as a cofactor.

Its subcellular location is the mitochondrion inner membrane. It catalyses the reaction 4 Fe(II)-[cytochrome c] + O2 + 8 H(+)(in) = 4 Fe(III)-[cytochrome c] + 2 H2O + 4 H(+)(out). In terms of biological role, component of the cytochrome c oxidase, the last enzyme in the mitochondrial electron transport chain which drives oxidative phosphorylation. The respiratory chain contains 3 multisubunit complexes succinate dehydrogenase (complex II, CII), ubiquinol-cytochrome c oxidoreductase (cytochrome b-c1 complex, complex III, CIII) and cytochrome c oxidase (complex IV, CIV), that cooperate to transfer electrons derived from NADH and succinate to molecular oxygen, creating an electrochemical gradient over the inner membrane that drives transmembrane transport and the ATP synthase. Cytochrome c oxidase is the component of the respiratory chain that catalyzes the reduction of oxygen to water. Electrons originating from reduced cytochrome c in the intermembrane space (IMS) are transferred via the dinuclear copper A center (CU(A)) of subunit 2 and heme A of subunit 1 to the active site in subunit 1, a binuclear center (BNC) formed by heme A3 and copper B (CU(B)). The BNC reduces molecular oxygen to 2 water molecules using 4 electrons from cytochrome c in the IMS and 4 protons from the mitochondrial matrix. The protein is Cytochrome c oxidase subunit 2 (MT-CO2) of Microcebus tavaratra (Northern rufous mouse lemur).